Here is a 279-residue protein sequence, read N- to C-terminus: D-aminoacyl-tRNA deacylase (279 aa).

The interval 81–100 (GRKSLTVHHPGNPTEDNSLG) is disordered.

The protein belongs to the DtdA deacylase family. Monomer. Zn(2+) serves as cofactor.

The enzyme catalyses a D-aminoacyl-tRNA + H2O = a tRNA + a D-alpha-amino acid + H(+). The catalysed reaction is glycyl-tRNA(Ala) + H2O = tRNA(Ala) + glycine + H(+). Its function is as follows. D-aminoacyl-tRNA deacylase with broad substrate specificity. By recycling D-aminoacyl-tRNA to D-amino acids and free tRNA molecules, this enzyme counteracts the toxicity associated with the formation of D-aminoacyl-tRNA entities in vivo. The sequence is that of D-aminoacyl-tRNA deacylase from Aeropyrum pernix (strain ATCC 700893 / DSM 11879 / JCM 9820 / NBRC 100138 / K1).